Reading from the N-terminus, the 255-residue chain is Tryptophan synthase alpha chain (255 aa).

Catalysis depends on proton acceptor residues Glu-42 and Asp-53.

The protein belongs to the TrpA family. Tetramer of two alpha and two beta chains.

The catalysed reaction is (1S,2R)-1-C-(indol-3-yl)glycerol 3-phosphate + L-serine = D-glyceraldehyde 3-phosphate + L-tryptophan + H2O. It participates in amino-acid biosynthesis; L-tryptophan biosynthesis; L-tryptophan from chorismate: step 5/5. Functionally, the alpha subunit is responsible for the aldol cleavage of indoleglycerol phosphate to indole and glyceraldehyde 3-phosphate. The chain is Tryptophan synthase alpha chain from Wolinella succinogenes (strain ATCC 29543 / DSM 1740 / CCUG 13145 / JCM 31913 / LMG 7466 / NCTC 11488 / FDC 602W) (Vibrio succinogenes).